The sequence spans 420 residues: UDP-N-acetylmuramoylalanine--D-glutamate ligase (420 aa).

An ATP-binding site is contributed by 109–115 (GSVGKST).

This sequence belongs to the MurCDEF family.

It localises to the cytoplasm. It catalyses the reaction UDP-N-acetyl-alpha-D-muramoyl-L-alanine + D-glutamate + ATP = UDP-N-acetyl-alpha-D-muramoyl-L-alanyl-D-glutamate + ADP + phosphate + H(+). The protein operates within cell wall biogenesis; peptidoglycan biosynthesis. Functionally, cell wall formation. Catalyzes the addition of glutamate to the nucleotide precursor UDP-N-acetylmuramoyl-L-alanine (UMA). The polypeptide is UDP-N-acetylmuramoylalanine--D-glutamate ligase (Fervidobacterium nodosum (strain ATCC 35602 / DSM 5306 / Rt17-B1)).